The following is a 660-amino-acid chain: GRIP and coiled-coil domain-containing protein 2 (660 aa).

The disordered stretch occupies residues 1-28; the sequence is MSAPESSISPVPPPGSSSGGGKKLDSLP. Coiled coils occupy residues 30-92, 115-464, and 517-596; these read EDLV…VENN, EWKE…KAIA, and DEYR…EYLK. The region spanning 585-636 is the GRIP domain; that stretch reads ELSNEKNMEYLKNVFVQFLKPESVPAERDQLVIVLQRVLHLSPKEVEILKAA.

This Caenorhabditis elegans protein is GRIP and coiled-coil domain-containing protein 2.